The chain runs to 1001 residues: E3 ubiquitin-protein ligase BRE1B (1001 aa).

The interval 1 to 40 is disordered; sequence MSGLSNKRAAGDGGSGPPEKKMNREEKTTTTLIEPIRLGG. Residues 18–28 show a composition bias toward basic and acidic residues; the sequence is PEKKMNREEKT. Residue K20 is modified to N6-acetyllysine. Position 42 is a phosphoserine (S42). Residues 55–91 are a coiled coil; sequence KNKKLAERLEQRQACEDELRERIEKLEKRQATDDATL. A disordered region spans residues 122–142; the sequence is TEVPGCQEGLTRDVIPRPDPG. Coiled coils occupy residues 189 to 377 and 437 to 525; these read KAAV…LRSL and LQKK…ASGS. 2 positions are modified to N6-acetyllysine: K355 and K517. A disordered region spans residues 519–647; it reads RAQASGSSHC…KAKVEEAKRK (129 aa). Residues 565–576 show a composition bias toward low complexity; it reads ALLAGATSATSS. Glycyl lysine isopeptide (Lys-Gly) (interchain with G-Cter in SUMO2) cross-links involve residues K578 and K579. Residues S584 and S585 each carry the phosphoserine modification. Basic and acidic residues-rich tracts occupy residues 602–619 and 633–647; these read RGRE…EREG and RADR…AKRK. Residues 627 to 946 adopt a coiled-coil conformation; the sequence is AASTLSRADR…EEIKEYKARL (320 aa). The RING-type zinc finger occupies 948–987; the sequence is CPCCNTRKKDAVLTKCFHVFCFECVRGRYEARQRKCPKCN.

Belongs to the BRE1 family. In terms of assembly, component of the RNF20/40 complex (also known as BRE1 complex) probably composed of 2 copies of RNF20/BRE1A and 2 copies of RNF40/BRE1B. Interacts with UBE2E1/UBCH6. Interacts with RB1 and WAC.

The protein resides in the nucleus. The catalysed reaction is S-ubiquitinyl-[E2 ubiquitin-conjugating enzyme]-L-cysteine + [acceptor protein]-L-lysine = [E2 ubiquitin-conjugating enzyme]-L-cysteine + N(6)-ubiquitinyl-[acceptor protein]-L-lysine.. Its pathway is protein modification; protein ubiquitination. Functionally, component of the RNF20/40 E3 ubiquitin-protein ligase complex that mediates monoubiquitination of 'Lys-120' of histone H2B (H2BK120ub1). H2BK120ub1 gives a specific tag for epigenetic transcriptional activation and is also prerequisite for histone H3 'Lys-4' and 'Lys-79' methylation (H3K4me and H3K79me, respectively). It thereby plays a central role in histone code and gene regulation. The RNF20/40 complex forms a H2B ubiquitin ligase complex in cooperation with the E2 enzyme UBE2A or UBE2B; reports about the cooperation with UBE2E1/UBCH are contradictory. Required for transcriptional activation of Hox genes. This chain is E3 ubiquitin-protein ligase BRE1B (Rnf40), found in Mus musculus (Mouse).